Reading from the N-terminus, the 172-residue chain is NADH-quinone oxidoreductase subunit B (172 aa).

Positions 46, 47, 111, and 141 each coordinate [4Fe-4S] cluster.

This sequence belongs to the complex I 20 kDa subunit family. In terms of assembly, NDH-1 is composed of 14 different subunits. Subunits NuoB, C, D, E, F, and G constitute the peripheral sector of the complex. The cofactor is [4Fe-4S] cluster.

The protein resides in the cell membrane. The enzyme catalyses a quinone + NADH + 5 H(+)(in) = a quinol + NAD(+) + 4 H(+)(out). NDH-1 shuttles electrons from NADH, via FMN and iron-sulfur (Fe-S) centers, to quinones in the respiratory chain. The immediate electron acceptor for the enzyme in this species is believed to be a menaquinone. Couples the redox reaction to proton translocation (for every two electrons transferred, four hydrogen ions are translocated across the cytoplasmic membrane), and thus conserves the redox energy in a proton gradient. In Bacillus cytotoxicus (strain DSM 22905 / CIP 110041 / 391-98 / NVH 391-98), this protein is NADH-quinone oxidoreductase subunit B.